A 122-amino-acid polypeptide reads, in one-letter code: Large ribosomal subunit protein uL14 (122 aa).

Belongs to the universal ribosomal protein uL14 family. Part of the 50S ribosomal subunit. Forms a cluster with proteins L3 and L19. In the 70S ribosome, L14 and L19 interact and together make contacts with the 16S rRNA in bridges B5 and B8.

Its function is as follows. Binds to 23S rRNA. Forms part of two intersubunit bridges in the 70S ribosome. This Symbiobacterium thermophilum (strain DSM 24528 / JCM 14929 / IAM 14863 / T) protein is Large ribosomal subunit protein uL14.